Here is a 201-residue protein sequence, read N- to C-terminus: MEKFSVHRGVGVPMRRTDVDTDQIIPAVYLKRVTKTGFEDALFAGWRKDPGFVLNQEPYRPGSVLVAGQDFGTGSSREHAVWALRDYGFRAVLAPRFGDIFRGNAGKQGLLAAVVAQSDIDLIWKALEAHPGTEVTVDLIERIVQVDDFTAPFEVDDYVRWRLVEGLDDIGLTLRHADAITDFEARRPSFKPTTTPLAPSA.

This sequence belongs to the LeuD family. LeuD type 1 subfamily. Heterodimer of LeuC and LeuD.

The enzyme catalyses (2R,3S)-3-isopropylmalate = (2S)-2-isopropylmalate. It functions in the pathway amino-acid biosynthesis; L-leucine biosynthesis; L-leucine from 3-methyl-2-oxobutanoate: step 2/4. In terms of biological role, catalyzes the isomerization between 2-isopropylmalate and 3-isopropylmalate, via the formation of 2-isopropylmaleate. The protein is 3-isopropylmalate dehydratase small subunit of Kineococcus radiotolerans (strain ATCC BAA-149 / DSM 14245 / SRS30216).